The chain runs to 561 residues: Acylcarnitine hydrolase (561 aa).

An N-terminal signal peptide occupies residues 1–26 (MTRNQLHNWLNAGFFGLLLLLIHVQG). C97 and C125 form a disulfide bridge. Catalysis depends on S230, which acts as the Acyl-ester intermediate. C282 and C293 form a disulfide bridge. Residues E347 and H459 each act as charge relay system in the active site. The short motif at 558 to 561 (HREL) is the Prevents secretion from ER element.

This sequence belongs to the type-B carboxylesterase/lipase family. In terms of tissue distribution, detected in liver (at protein level).

The protein resides in the microsome. It localises to the endoplasmic reticulum. The enzyme catalyses an O-acyl-(R)-carnitine + H2O = (R)-carnitine + a fatty acid + H(+). The catalysed reaction is all-trans-retinyl hexadecanoate + H2O = all-trans-retinol + hexadecanoate + H(+). Functionally, hydrolase with high activity towards palmitoylcarnitine. Is also active with p-nitrophenylacetate and alpha-naphthylacetate. May also hydrolyze retinyl esters. The protein is Acylcarnitine hydrolase of Mus musculus (Mouse).